The primary structure comprises 765 residues: E3 ubiquitin-protein ligase SlrP (765 aa).

Residues 1 to 453 form an interaction with target proteins region; sequence MFNITNIQST…YQGPRVLFAM (453 aa). 10 LRR repeats span residues 200–219, 221–242, 243–262, 263–284, 285–305, 306–325, 326–346, 347–368, 369–389, and 390–410; these read QITT…ENLQ, NIKT…LPDT, IQEM…RLPS, ALQS…LPEE, LRYL…LPSE, ITHL…TLPP, GLKT…SLPP, ELQV…LPPT, ITTL…LPAA, and LQIM…LPHF. Residues 454–461 form a linker region; that stretch reads GDFSIVRV. An E3 ubiquitin-protein ligase catalytic domain region spans residues 462–765; sequence TRPLHQAVQG…VSSLMSAYWR (304 aa). The NEL domain occupies 464 to 758; sequence PLHQAVQGWL…NILLKKEVSS (295 aa). The active-site Glycyl thioester intermediate is the Cys-546.

This sequence belongs to the LRR-containing bacterial E3 ligase family. Interacts with host TXN. Ubiquitinated in the presence of host E1 ubiquitin-activating enzyme, E2 ubiquitin-conjugating enzyme and ubiquitin.

It is found in the secreted. The protein localises to the host cytoplasm. It carries out the reaction S-ubiquitinyl-[E2 ubiquitin-conjugating enzyme]-L-cysteine + [acceptor protein]-L-lysine = [E2 ubiquitin-conjugating enzyme]-L-cysteine + N(6)-ubiquitinyl-[acceptor protein]-L-lysine.. In terms of biological role, effector proteins function to alter host cell physiology and promote bacterial survival in host tissues. This protein is an E3 ubiquitin ligase that interferes with host's ubiquitination pathway. Can ubiquitinate both ubiquitin and host TXN (thioredoxin). Leads to significant decrease of thioredoxin activity and increase of host cell death. The polypeptide is E3 ubiquitin-protein ligase SlrP (slrP) (Salmonella typhimurium (strain 14028s / SGSC 2262)).